The chain runs to 418 residues: Serine hydroxymethyltransferase (418 aa).

(6S)-5,6,7,8-tetrahydrofolate-binding positions include L121 and 125-127 (GHL). K230 bears the N6-(pyridoxal phosphate)lysine mark. 356 to 358 (SPF) is a binding site for (6S)-5,6,7,8-tetrahydrofolate.

This sequence belongs to the SHMT family. Homodimer. Pyridoxal 5'-phosphate is required as a cofactor.

The protein localises to the cytoplasm. It carries out the reaction (6R)-5,10-methylene-5,6,7,8-tetrahydrofolate + glycine + H2O = (6S)-5,6,7,8-tetrahydrofolate + L-serine. The protein operates within one-carbon metabolism; tetrahydrofolate interconversion. Its pathway is amino-acid biosynthesis; glycine biosynthesis; glycine from L-serine: step 1/1. Functionally, catalyzes the reversible interconversion of serine and glycine with tetrahydrofolate (THF) serving as the one-carbon carrier. This reaction serves as the major source of one-carbon groups required for the biosynthesis of purines, thymidylate, methionine, and other important biomolecules. Also exhibits THF-independent aldolase activity toward beta-hydroxyamino acids, producing glycine and aldehydes, via a retro-aldol mechanism. The sequence is that of Serine hydroxymethyltransferase from Shewanella halifaxensis (strain HAW-EB4).